We begin with the raw amino-acid sequence, 186 residues long: Protein GrpE (186 aa).

Over residues 1 to 15 (MADEQQTLDQQTPEQ) the composition is skewed to polar residues. Residues 1 to 20 (MADEQQTLDQQTPEQPTGAA) are disordered.

This sequence belongs to the GrpE family. In terms of assembly, homodimer.

It is found in the cytoplasm. Participates actively in the response to hyperosmotic and heat shock by preventing the aggregation of stress-denatured proteins, in association with DnaK and GrpE. It is the nucleotide exchange factor for DnaK and may function as a thermosensor. Unfolded proteins bind initially to DnaJ; upon interaction with the DnaJ-bound protein, DnaK hydrolyzes its bound ATP, resulting in the formation of a stable complex. GrpE releases ADP from DnaK; ATP binding to DnaK triggers the release of the substrate protein, thus completing the reaction cycle. Several rounds of ATP-dependent interactions between DnaJ, DnaK and GrpE are required for fully efficient folding. In Pseudomonas aeruginosa (strain LESB58), this protein is Protein GrpE.